Here is a 404-residue protein sequence, read N- to C-terminus: Ubiquitin-like modifier-activating enzyme 5 (404 aa).

Serine 45 carries the post-translational modification Phosphoserine. 5 residues coordinate ATP: glycine 83, aspartate 104, lysine 127, asparagine 150, and asparagine 184. 2 residues coordinate Zn(2+): cysteine 226 and cysteine 229. Catalysis depends on cysteine 250, which acts as the Glycyl thioester intermediate. Zn(2+) contacts are provided by cysteine 303 and cysteine 308. The UFM1-interacting sequence (UIS) motif lies at 334–346 (IIHEDNEWGIELV). A linker region spans residues 347-377 (SEVSEEELKNSSGPVPDLPEGITVAYTIPKK). Phosphoserine is present on residues serine 358 and serine 393. A UFC1-binding sequence (UFC) motif is present at residues 389-404 (DSGESLEDLMAKMKNM).

Belongs to the ubiquitin-activating E1 family. UBA5 subfamily. Homodimer; homodimerization is required for UFM1 activation. Interacts (via UIS motif) with UFM1; binds UFM1 via a trans-binding mechanism in which UFM1 interacts with distinct sites in both subunits of the UBA5 homodimer. Interacts (via C-terminus) with UFC1. Interacts (via UIS motif) with GABARAPL2 and, with lower affinity, with GABARAP and GABARAPL1.

The protein localises to the cytoplasm. The protein resides in the nucleus. Its subcellular location is the endoplasmic reticulum membrane. It is found in the golgi apparatus. In terms of biological role, E1-like enzyme which specifically catalyzes the first step in ufmylation. Activates UFM1 by first adenylating its C-terminal glycine residue with ATP, and thereafter linking this residue to the side chain of a cysteine residue in E1, yielding a UFM1-E1 thioester and free AMP. Activates UFM1 via a trans-binding mechanism, in which UFM1 interacts with distinct sites in both subunits of the UBA5 homodimer. Trans-binding also promotes stabilization of the UBA5 homodimer, and enhances ATP-binding. Transfer of UFM1 from UBA5 to the E2-like enzyme UFC1 also takes place using a trans mechanism. Ufmylation plays a key role in various processes, such as ribosome recycling, response to DNA damage, interferon response or reticulophagy (also called ER-phagy). Ufmylation is essential for erythroid differentiation of both megakaryocytes and erythrocytes. The protein is Ubiquitin-like modifier-activating enzyme 5 of Pongo abelii (Sumatran orangutan).